A 247-amino-acid polypeptide reads, in one-letter code: UDP-2,3-diacylglucosamine hydrolase (247 aa).

Mn(2+)-binding residues include Asp8, His10, Asp41, Asn79, and His114. A substrate-binding site is contributed by 79-80; sequence NR. Residues Asp122, Ser160, Asp171, Gln174, and His202 each contribute to the substrate site. Mn(2+)-binding residues include His202 and His204.

Belongs to the LpxH family. The cofactor is Mn(2+).

It is found in the cell inner membrane. The enzyme catalyses UDP-2-N,3-O-bis[(3R)-3-hydroxytetradecanoyl]-alpha-D-glucosamine + H2O = 2-N,3-O-bis[(3R)-3-hydroxytetradecanoyl]-alpha-D-glucosaminyl 1-phosphate + UMP + 2 H(+). The protein operates within glycolipid biosynthesis; lipid IV(A) biosynthesis; lipid IV(A) from (3R)-3-hydroxytetradecanoyl-[acyl-carrier-protein] and UDP-N-acetyl-alpha-D-glucosamine: step 4/6. Its function is as follows. Hydrolyzes the pyrophosphate bond of UDP-2,3-diacylglucosamine to yield 2,3-diacylglucosamine 1-phosphate (lipid X) and UMP by catalyzing the attack of water at the alpha-P atom. Involved in the biosynthesis of lipid A, a phosphorylated glycolipid that anchors the lipopolysaccharide to the outer membrane of the cell. In Xanthomonas campestris pv. campestris (strain B100), this protein is UDP-2,3-diacylglucosamine hydrolase.